The following is a 251-amino-acid chain: Osmotin-like protein (251 aa).

The signal sequence occupies residues 1 to 21; the sequence is MSHLTTFLVFFLLAFVTYTYA. 8 disulfide bridges follow: Cys31-Cys226, Cys73-Cys83, Cys88-Cys94, Cys142-Cys214, Cys147-Cys197, Cys155-Cys165, Cys169-Cys178, and Cys179-Cys184. N-linked (GlcNAc...) asparagine glycosylation is present at Asn233.

It belongs to the thaumatin family.

This is Osmotin-like protein (OLPA) from Nicotiana tabacum (Common tobacco).